A 681-amino-acid polypeptide reads, in one-letter code: Peroxisomal acyl-coenzyme A oxidase 2 (681 aa).

Residues 1–28 (MGNPGDRVSLGETWSREVHPDIDSERHS) form a disordered region. Phosphoserine is present on S9. Position 13 is a phosphothreonine (T13). Residues 14 to 28 (WSREVHPDIDSERHS) are compositionally biased toward basic and acidic residues. K66, K137, K303, K453, K561, and K667 each carry N6-succinyllysine. Residues 679–681 (PKL) carry the Microbody targeting signal motif.

It belongs to the acyl-CoA oxidase family. Homodimer. It depends on FAD as a cofactor. Post-translationally, acetylation of Lys-667 is observed in liver mitochondria from fasted mice but not from fed mice.

It localises to the peroxisome. The enzyme catalyses (25R)-3alpha,7alpha,12alpha-trihydroxy-5beta-cholestan-26-oyl-CoA + A + H2O = (24R,25R)-3alpha,7alpha,12alpha,24-tetrahydroxy-5beta-cholestan-26-oyl-CoA + AH2. The catalysed reaction is (25S)-3alpha,7alpha,12alpha-trihydroxy-5beta-cholestan-26-oyl-CoA + O2 = (24E)-3alpha,7alpha,12alpha-trihydroxy-5beta-cholest-24-en-26-oyl-CoA + H2O2. Its function is as follows. Oxidizes the CoA esters of the bile acid intermediates di- and tri-hydroxycoprostanic acids. Capable of oxidizing short as well as long chain 2-methyl branched fatty acids. This is Peroxisomal acyl-coenzyme A oxidase 2 from Mus musculus (Mouse).